Consider the following 156-residue polypeptide: Small ribosomal subunit protein uS7 (156 aa).

Belongs to the universal ribosomal protein uS7 family. As to quaternary structure, part of the 30S ribosomal subunit. Contacts proteins S9 and S11.

One of the primary rRNA binding proteins, it binds directly to 16S rRNA where it nucleates assembly of the head domain of the 30S subunit. Is located at the subunit interface close to the decoding center, probably blocks exit of the E-site tRNA. The sequence is that of Small ribosomal subunit protein uS7 from Shewanella frigidimarina (strain NCIMB 400).